The sequence spans 444 residues: Glucarate dehydratase (444 aa).

Residues His30, Thr101, Tyr148, and Lys203 each contribute to the substrate site. Lys205 (proton acceptor) is an active-site residue. Mg(2+) contacts are provided by Asp233, Glu264, and Asn287. 233-235 (DPN) is a substrate binding site. Substrate is bound by residues Asn287, 337 to 339 (HSN), His366, and Arg420. His337 (proton acceptor) is an active-site residue.

This sequence belongs to the mandelate racemase/muconate lactonizing enzyme family. GlucD subfamily. Mg(2+) serves as cofactor.

It carries out the reaction D-glucarate = 5-dehydro-4-deoxy-D-glucarate + H2O. It functions in the pathway carbohydrate acid metabolism; D-glucarate degradation; 2,5-dioxopentanoate from D-glucarate: step 1/2. Functionally, catalyzes the dehydration of glucarate to 5-keto-4-deoxy-D-glucarate (5-kdGluc). This chain is Glucarate dehydratase (gudD), found in Acinetobacter baylyi (strain ATCC 33305 / BD413 / ADP1).